Consider the following 420-residue polypeptide: Shaggy-related protein kinase delta (420 aa).

The segment at 1–61 (MESHLGNGVG…DIIDGVGAEP (61 aa)) is disordered. Residues 10–26 (GSSRSAKNTKNTSSSVD) show a composition bias toward polar residues. The segment covering 28 to 41 (LSRDMLEMKIRDKT) has biased composition (basic and acidic residues). Residues 42–53 (EADEERDSEPDI) are compositionally biased toward acidic residues. The 285-residue stretch at 82-366 (YIAEHVVGTG…AVEACIHPFF (285 aa)) folds into the Protein kinase domain. ATP-binding positions include 88 to 96 (VGTGSFGMV) and Lys-111. Asp-207 acts as the Proton acceptor in catalysis. At Tyr-242 the chain carries Phosphotyrosine.

The protein belongs to the protein kinase superfamily. CMGC Ser/Thr protein kinase family. GSK-3 subfamily. Post-translationally, autophosphorylated mainly on threonine and serine residues.

It catalyses the reaction L-seryl-[protein] + ATP = O-phospho-L-seryl-[protein] + ADP + H(+). It carries out the reaction L-threonyl-[protein] + ATP = O-phospho-L-threonyl-[protein] + ADP + H(+). In terms of biological role, may mediate extracellular signals to regulate transcription in differentiating cells. The polypeptide is Shaggy-related protein kinase delta (ASK4) (Arabidopsis thaliana (Mouse-ear cress)).